The primary structure comprises 71 residues: DNA-directed RNA polymerase subunit epsilon (71 aa).

Belongs to the RNA polymerase subunit epsilon family. In terms of assembly, monomer. RNAP is composed of a core of 2 alpha, a beta and a beta' subunit. The core is associated with a delta subunit, and at least one of epsilon or omega. When a sigma factor is associated with the core the holoenzyme is formed, which can initiate transcription.

It catalyses the reaction RNA(n) + a ribonucleoside 5'-triphosphate = RNA(n+1) + diphosphate. Functionally, a non-essential component of RNA polymerase (RNAP). Has a similar structure to bacteriophage T7 protein Gp2 (AC P03704), which is known to bind to RNAP in the DNA binding-cleft. Unlike Gp2 however, this protein does not inhibit transcription initiation. This is DNA-directed RNA polymerase subunit epsilon from Geobacillus stearothermophilus (strain DSM 13240 / CIP 106956 / 10).